Here is a 104-residue protein sequence, read N- to C-terminus: Large ribosomal subunit protein uL24 (104 aa).

Belongs to the universal ribosomal protein uL24 family. As to quaternary structure, part of the 50S ribosomal subunit.

Its function is as follows. One of two assembly initiator proteins, it binds directly to the 5'-end of the 23S rRNA, where it nucleates assembly of the 50S subunit. Functionally, one of the proteins that surrounds the polypeptide exit tunnel on the outside of the subunit. The chain is Large ribosomal subunit protein uL24 from Clostridium botulinum (strain Alaska E43 / Type E3).